Here is a 158-residue protein sequence, read N- to C-terminus: Regulator of sigma D (158 aa).

It belongs to the Rsd/AlgQ family. In terms of assembly, interacts with RpoD.

Its subcellular location is the cytoplasm. Its function is as follows. Binds RpoD and negatively regulates RpoD-mediated transcription activation by preventing the interaction between the primary sigma factor RpoD with the catalytic core of the RNA polymerase and with promoter DNA. May be involved in replacement of the RNA polymerase sigma subunit from RpoD to RpoS during the transition from exponential growth to the stationary phase. The protein is Regulator of sigma D of Escherichia coli (strain UTI89 / UPEC).